Reading from the N-terminus, the 210-residue chain is Fibrillarin-like rRNA/tRNA 2'-O-methyltransferase (210 aa).

S-adenosyl-L-methionine-binding positions include 70 to 71 (TT), 88 to 89 (EY), 113 to 114 (DA), and 133 to 136 (DIAQ).

This sequence belongs to the methyltransferase superfamily. Fibrillarin family. In terms of assembly, interacts with nop5. Component of box C/D small ribonucleoprotein (sRNP) particles that contain rpl7ae, FlpA and nop5, plus a guide RNA.

Its function is as follows. Involved in pre-rRNA and tRNA processing. Utilizes the methyl donor S-adenosyl-L-methionine to catalyze the site-specific 2'-hydroxyl methylation of ribose moieties in rRNA and tRNA. Site specificity is provided by a guide RNA that base pairs with the substrate. Methylation occurs at a characteristic distance from the sequence involved in base pairing with the guide RNA. This Archaeoglobus fulgidus (strain ATCC 49558 / DSM 4304 / JCM 9628 / NBRC 100126 / VC-16) protein is Fibrillarin-like rRNA/tRNA 2'-O-methyltransferase.